We begin with the raw amino-acid sequence, 122 residues long: Large ribosomal subunit protein eL18 (122 aa).

Belongs to the eukaryotic ribosomal protein eL18 family.

The sequence is that of Large ribosomal subunit protein eL18 from Picrophilus torridus (strain ATCC 700027 / DSM 9790 / JCM 10055 / NBRC 100828 / KAW 2/3).